Consider the following 1200-residue polypeptide: MSLQFVLGPAKMDHRRTMVAQLVATLMAKPQDQFFYLVPNHIKFDTEVDVLNRLAQAFGQPDLYAQTQVQVFSFTRLAWYLMKNEAAYQVPRLSAAGIDMLLYRILQRHADELRLFGGEISQTGFVTQLAREINELQTANLQPEDVVQLAANAQAGDLQAKLHDLAIVYKDFVAATADKYLKPADILVQLNAYLRRQDLHGTHVYVELAGFAQLPAQEQGIVTTMLEQGADVTISLMLDHKVVDRAPENGTLFYQSGRLYYRLYQYARIRQIPVSQDIYAETPRVAPGLVALDDFWRGQPQAATGYEEPNTNVHLFRTDSRQTELAQVGRMIRAMVAKKHADPADDYHYRDFLIMTRHLDAYQTMLAPTFHELEIPYFVDLQRSMADHPLVELINALFDIDAQQYQYRDVMRVLKTELLMPNINGQPMDRQAYRQAVDLTENFILKSGYHGQRWVQREDWQYFQLTEGDAGVETDQNAEISRQINLIHHFVAETLPPFFKKMRQAPDGKAAVTLLVNFLTSQGVTDQLLAWRDQALDRQDVRAAAEPEQTWQTFCGMLDEYVTILGAEPFEITDFLALLQAGFEGASYSQIPSTLDQVLISESGMVQSQDHKVVFMVGATDLVMPDRIMTNNLLSDVDKENLQLTLSSLDGDHYLNDSAVVQLGDESCLNYLAFLSARRHLFFSAPLKDDQETDLNWSNYVRRIQRQFNLREHTYLGTPDPTNADARPFVGTKRRTISHVIQVYRDVLTTNTDRNRVGAPLQPAPVWVWLRQQLTRDPQFGELARQLMAGLSYRNQPVKLTPASVEALYGHQIYTSISKLEEFYRNQYAYFLKYGLKLRERDVFELSAASTGEFFHAVLDGLIKALRSDQIPLAQASDQQLGQYLETVTRQILDQPQFTILTSSNRMAYLQRQLINTVRQIAFAIRNQSKLSAAEPKQTEILFGNVGKEHGLKALDFQIDATHSVHVRGKIDRLDQIQVADQSYLGIVDYKSSQHKFDFQEAYYGLAMQMLTYLDAVLHNEQALVGSDQAAVKLAGALYMHIQNPTLKPKDIQGGFEAALLKKNKYKGILLDDPQLLEHLDSELQQGNGTSKVYPFARKKDGSYSGGRAASLVTNDQLERLLQHNSQLIIAAAEAIFAGEIQLNPIRLNDKTTALQYSPYLSIMQFDAMLAENAYRDLPPLSAKQVLDLLKTQKGGENHE.

This sequence belongs to the helicase family. AddB/RexB type 2 subfamily. In terms of assembly, heterodimer of AddA and RexB. Mg(2+) serves as cofactor.

Its function is as follows. The heterodimer acts as both an ATP-dependent DNA helicase and an ATP-dependent, dual-direction single-stranded exonuclease. Recognizes the chi site generating a DNA molecule suitable for the initiation of homologous recombination. This subunit has 5' -&gt; 3' nuclease activity but not helicase activity. This chain is ATP-dependent helicase/deoxyribonuclease subunit B, found in Lactiplantibacillus plantarum (strain ATCC BAA-793 / NCIMB 8826 / WCFS1) (Lactobacillus plantarum).